The primary structure comprises 728 residues: Catalase-peroxidase (728 aa).

A disordered region spans residues 1–26 (MDNPTDTAGKCPVAHGNKPRGPSNRD). Residues 96–218 (WHSAGTYRIT…LGAVQMGLIY (123 aa)) constitute a cross-link (tryptophyl-tyrosyl-methioninium (Trp-Tyr) (with M-244)). The active-site Proton acceptor is the His97. A cross-link (tryptophyl-tyrosyl-methioninium (Tyr-Met) (with W-96)) is located at residues 218-244 (YVNPEGPNGNPDPVAAARDIRETFARM). His259 serves as a coordination point for heme b.

It belongs to the peroxidase family. Peroxidase/catalase subfamily. As to quaternary structure, homodimer or homotetramer. Requires heme b as cofactor. Formation of the three residue Trp-Tyr-Met cross-link is important for the catalase, but not the peroxidase activity of the enzyme.

It catalyses the reaction H2O2 + AH2 = A + 2 H2O. The catalysed reaction is 2 H2O2 = O2 + 2 H2O. Its function is as follows. Bifunctional enzyme with both catalase and broad-spectrum peroxidase activity. Important for stationary phase survival. The sequence is that of Catalase-peroxidase from Rhizobium etli (strain ATCC 51251 / DSM 11541 / JCM 21823 / NBRC 15573 / CFN 42).